Reading from the N-terminus, the 471-residue chain is ATP synthase subunit beta (471 aa).

Gly-153–Thr-160 contacts ATP.

This sequence belongs to the ATPase alpha/beta chains family. As to quaternary structure, F-type ATPases have 2 components, CF(1) - the catalytic core - and CF(0) - the membrane proton channel. CF(1) has five subunits: alpha(3), beta(3), gamma(1), delta(1), epsilon(1). CF(0) has three main subunits: a(1), b(2) and c(9-12). The alpha and beta chains form an alternating ring which encloses part of the gamma chain. CF(1) is attached to CF(0) by a central stalk formed by the gamma and epsilon chains, while a peripheral stalk is formed by the delta and b chains.

It is found in the cell membrane. The catalysed reaction is ATP + H2O + 4 H(+)(in) = ADP + phosphate + 5 H(+)(out). Functionally, produces ATP from ADP in the presence of a proton gradient across the membrane. The catalytic sites are hosted primarily by the beta subunits. The polypeptide is ATP synthase subunit beta (Levilactobacillus brevis (strain ATCC 367 / BCRC 12310 / CIP 105137 / JCM 1170 / LMG 11437 / NCIMB 947 / NCTC 947) (Lactobacillus brevis)).